We begin with the raw amino-acid sequence, 245 residues long: Demethylmenaquinone methyltransferase (245 aa).

Residues Thr-58, Asp-79, and Asn-106–Ala-107 contribute to the S-adenosyl-L-methionine site.

Belongs to the class I-like SAM-binding methyltransferase superfamily. MenG/UbiE family.

The enzyme catalyses a 2-demethylmenaquinol + S-adenosyl-L-methionine = a menaquinol + S-adenosyl-L-homocysteine + H(+). It functions in the pathway quinol/quinone metabolism; menaquinone biosynthesis; menaquinol from 1,4-dihydroxy-2-naphthoate: step 2/2. Its function is as follows. Methyltransferase required for the conversion of demethylmenaquinol (DMKH2) to menaquinol (MKH2). This Halalkalibacterium halodurans (strain ATCC BAA-125 / DSM 18197 / FERM 7344 / JCM 9153 / C-125) (Bacillus halodurans) protein is Demethylmenaquinone methyltransferase.